The sequence spans 137 residues: Prefoldin subunit alpha (137 aa).

Belongs to the prefoldin subunit alpha family. As to quaternary structure, heterohexamer of two alpha and four beta subunits.

It is found in the cytoplasm. Molecular chaperone capable of stabilizing a range of proteins. Seems to fulfill an ATP-independent, HSP70-like function in archaeal de novo protein folding. The polypeptide is Prefoldin subunit alpha (pfdA) (Archaeoglobus fulgidus (strain ATCC 49558 / DSM 4304 / JCM 9628 / NBRC 100126 / VC-16)).